The primary structure comprises 274 residues: F-box protein SKIP5 (274 aa).

Positions 32–79 constitute an F-box domain; that stretch reads LTSLNNLDDGCLMHILSFLSPIPDRYNTALVCHRWRYLACHPRLWLRV.

As to quaternary structure, part of a SCF (SKP1-cullin-F-box) protein ligase complex. Interacts with SKP1A/ASK1.

It functions in the pathway protein modification; protein ubiquitination. This is F-box protein SKIP5 (SKIP5) from Arabidopsis thaliana (Mouse-ear cress).